Reading from the N-terminus, the 1062-residue chain is Inversin (1062 aa).

ANK repeat units lie at residues 13–42 (SLAS…ALRD), 47–76 (FGRT…DVNK), 80–110 (SRRT…WMQK), 113–144 (EEMT…EVDT), 148–177 (NKQT…NIGI), 181–213 (EGKI…TESL), 220–250 (EGRT…NITS), 254–283 (LFRT…SGTI), 288–317 (QGAT…VKDD), 321–350 (EGRT…DIDI), 356–385 (YGGT…QVDA), 389–418 (MKHT…RVDL), 422–451 (DGHS…NPNV), 455–484 (AGRT…DPNI), 488–517 (EGRT…FPNQ), and 523–553 (ERYT…SIAA). N75 carries the post-translational modification 3-hydroxyasparagine. Positions 490–498 (RTALHWSCN) match the D-box 1 motif. In terms of domain architecture, IQ 1 spans 555-584 (QDIAAFKIQAVYKGYKVRKAFRDRKNLLMK). The span at 589-608 (RKDAAAKKREEENKRKEAEQ) shows a compositional bias: basic and acidic residues. Residues 589-849 (RKDAAAKKRE…QDKLIGGVSS (261 aa)) are disordered. 2 stretches are compositionally biased toward polar residues: residues 636-658 (QNEG…TVQS) and 676-689 (QGDS…TASR). Residues 690-700 (KPSETPIEHCR) are compositionally biased toward basic and acidic residues. Residues 713 to 724 (GGNSSKNQGTSS) show a composition bias toward polar residues. Basic and acidic residues-rich tracts occupy residues 725–741 (VEKR…RCEE) and 775–788 (DHPR…DRAA). The D-box 2 motif lies at 907 to 915 (RKELFRRKN). The region spanning 914-943 (KNKAAAVIQRAWRSYQLRKHLSRLLHLKQL) is the IQ 2 domain. The disordered stretch occupies residues 1042 to 1062 (RSKKFSYNLQPSSQSKNKPKL). The segment covering 1046–1062 (FSYNLQPSSQSKNKPKL) has biased composition (polar residues).

Interacts with microtubules. Interacts with NPHP1. Interacts with DVL1, PRICKLE (PRICKLE1 or PRICKLE2) and Strabismus (VANGL1 or VANGL2). Binds calmodulin via its IQ domains. Interacts with APC2. Interacts with alpha-, beta-, and gamma-catenin. Interacts with N-cadherin (CDH2). Interacts with NPHP3. Interacts with IQCB1; the interaction likely requires additional interactors. Component of a complex containing at least ANKS6, INVS, NEK8 and NPHP3. ANKS6 may organize complex assembly by linking INVS and NPHP3 to NEK8 and INVS may target the complex to the proximal ciliary axoneme. In terms of processing, may be ubiquitinated via its interaction with APC2. Post-translationally, hydroxylated at Asn-75, most probably by HIF1AN. As to expression, strongly expressed in the primary cilia of renal cells, especially in the varicosities, swellings observed in the cilia. Localizes in the node monocilia and in other 9+0 monocilia, including those of kidney epithelial cells and the pituitary gland, but it does not localize to 9+2 cilia (at protein level). In adult, it is expressed at high level in liver and kidney. Weakly or not expressed in other tissues.

It is found in the cytoplasm. The protein resides in the cytoskeleton. Its subcellular location is the membrane. The protein localises to the nucleus. It localises to the perinuclear region. It is found in the spindle. Functionally, required for normal renal development and establishment of left-right axis. Probably acts as a molecular switch between different Wnt signaling pathways. Inhibits the canonical Wnt pathway by targeting cytoplasmic disheveled (DVL1) for degradation by the ubiquitin-proteasome. This suggests that it is required in renal development to oppose the repression of terminal differentiation of tubular epithelial cells by Wnt signaling. Involved in the organization of apical junctions in kidney cells together with NPHP1, NPHP4 and RPGRIP1L/NPHP8. Does not seem to be strictly required for ciliogenesis. In Mus musculus (Mouse), this protein is Inversin (Invs).